The sequence spans 542 residues: Protein MGF 505-11L (542 aa).

It belongs to the asfivirus MGF 505 family.

Plays a role in virus cell tropism, and may be required for efficient virus replication in macrophages. The chain is Protein MGF 505-11L from Ornithodoros (relapsing fever ticks).